The chain runs to 2248 residues: Zinc finger protein 407 (2248 aa).

Positions M1 to D32 are enriched in basic and acidic residues. Positions M1–L84 are disordered. 3 C2H2-type zinc fingers span residues L186–H208, H215–H238, and F244–H268. Disordered stretches follow at residues K291–N322 and S494–S515. The span at S494 to G504 shows a compositional bias: polar residues. C2H2-type zinc fingers lie at residues C528–H551, F557–H581, and F615–H639. Positions E667 to S700 are disordered. Over residues E669–H699 the composition is skewed to basic and acidic residues. The C2H2-type 7 zinc finger occupies F705–H728. Residues L821–N847 are disordered. C2H2-type zinc fingers lie at residues R850–H873 and Y879–H903. The tract at residues E910–R962 is disordered. 2 consecutive C2H2-type zinc fingers follow at residues N1017–H1040 and F1046–H1070. At S1262 the chain carries Phosphoserine. 2 consecutive C2H2-type zinc fingers follow at residues F1444–H1468 and F1486–H1509. A C2H2-type 14; degenerate zinc finger spans residues N1537 to H1561. 8 C2H2-type zinc fingers span residues F1567–H1589, Y1595–H1618, F1628–H1650, F1656–H1680, F1686–H1708, F1714–H1736, Y1742–H1767, and Y1773–H1796.

It is found in the nucleus. Functionally, may be involved in transcriptional regulation. The sequence is that of Zinc finger protein 407 (ZNF407) from Homo sapiens (Human).